The sequence spans 202 residues: FMN-dependent NADH:quinone oxidoreductase (202 aa).

FMN contacts are provided by residues Ser9, 15 to 17 (SAS), and 94 to 97 (MYNL).

This sequence belongs to the azoreductase type 1 family. Homodimer. It depends on FMN as a cofactor.

It carries out the reaction 2 a quinone + NADH + H(+) = 2 a 1,4-benzosemiquinone + NAD(+). The catalysed reaction is N,N-dimethyl-1,4-phenylenediamine + anthranilate + 2 NAD(+) = 2-(4-dimethylaminophenyl)diazenylbenzoate + 2 NADH + 2 H(+). In terms of biological role, quinone reductase that provides resistance to thiol-specific stress caused by electrophilic quinones. Its function is as follows. Also exhibits azoreductase activity. Catalyzes the reductive cleavage of the azo bond in aromatic azo compounds to the corresponding amines. The chain is FMN-dependent NADH:quinone oxidoreductase from Gluconobacter oxydans (strain 621H) (Gluconobacter suboxydans).